The primary structure comprises 206 residues: Large ribosomal subunit protein uL4 (206 aa).

The interval 44-78 is disordered; that stretch reads RSGNRAQKDREQVKHTTKKPWRQKGTGRARAGMSS. Residues 58–70 show a composition bias toward basic residues; that stretch reads HTTKKPWRQKGTG.

This sequence belongs to the universal ribosomal protein uL4 family. In terms of assembly, part of the 50S ribosomal subunit.

Functionally, one of the primary rRNA binding proteins, this protein initially binds near the 5'-end of the 23S rRNA. It is important during the early stages of 50S assembly. It makes multiple contacts with different domains of the 23S rRNA in the assembled 50S subunit and ribosome. Forms part of the polypeptide exit tunnel. The polypeptide is Large ribosomal subunit protein uL4 (Paraburkholderia phytofirmans (strain DSM 17436 / LMG 22146 / PsJN) (Burkholderia phytofirmans)).